We begin with the raw amino-acid sequence, 359 residues long: F-box/kelch-repeat protein At1g15670 (359 aa).

Positions 2-49 constitute an F-box domain; it reads ELIPDLPETVAYECLLRSSYKQFPLMASVCKLWQREISLSDFFRHRKA. Kelch repeat units follow at residues 119 to 167, 170 to 217, 219 to 269, 271 to 310, and 313 to 358; these read DLVV…ASDS, NVFV…FHAG, FHVI…CAAG, NGDLYACCRRDLMMMKDDTWYKVGNLPADVCNVSYVAIRR, and NLVV…CFLE.

The sequence is that of F-box/kelch-repeat protein At1g15670 from Arabidopsis thaliana (Mouse-ear cress).